The following is a 254-amino-acid chain: MWQLLLPTALLLLVSAGMRAEDLPKAVVFLEPQWYRVLEKDRVTLKCQGAYSPEDNSTRWFHNESLISSQTSSYFIAAARVNNSGEYRCQTSLSTLSDPVQLEVHIGWLLLQAPRWVFKEEESIHLRCHSWKNTLLHKVTYLQNGKGRKYFHQNSDFYIPKATLKDSGSYFCRGLIGSKNVSSETVNITITQDLAVSSISSFFPPGYQVSFCLVMVLLFAVDTGLYFSMKKSIPSSTRDWEDHKFKWSKDPQDK.

Residues 1–16 (MWQLLLPTALLLLVSA) form the signal peptide. Residues 17–208 (GMRAEDLPKA…ISSFFPPGYQ (192 aa)) lie on the Extracellular side of the membrane. Ig-like C2-type domains are found at residues 24–105 (PKAV…LEVH) and 107–189 (GWLL…VNIT). Intrachain disulfides connect Cys47-Cys89 and Cys128-Cys172. Residues Asn56, Asn63, and Asn82 are each glycosylated (N-linked (GlcNAc...) asparagine). Asn180 and Asn187 each carry an N-linked (GlcNAc...) asparagine glycan. Residues 209–229 (VSFCLVMVLLFAVDTGLYFSM) traverse the membrane as a helical segment. At 230 to 254 (KKSIPSSTRDWEDHKFKWSKDPQDK) the chain is on the cytoplasmic side.

As to quaternary structure, forms a heterooligomeric complex with ITAM-containing signaling subunits, either a homodimer of CD247, a homodimer of FCER1G or a heterodimer of CD247 and FCER1G. Interacts (via transmembrane domain) with signaling subunits; this interaction is a prerequisite for receptor complex expression on the cell surface and intracellular signal transduction. Binds the Fc region of antigen-complexed IgG with a preference for IgG1 and IgG3 isotypes. Interacts with CD2; this interaction is involved in NK cell activation and cytotoxicity. Interacts with S100A4; this interaction inhibits PKC-dependent phosphorylation of FCGR3A. In terms of processing, glycosylated. Glycosylation plays an inhibitory role in the interaction with IgG1 and IgG2. Post-translationally, undergoes rapid ectodomain shedding upon NK cell stimulation. The soluble form is produced by a proteolytic cleavage mediated by ADAM17. Repeated stimulation causes receptor shedding, a mechanism that allows for increased NK cell motility and detachment from opsonized target cells while avoiding activation-induced NK cell apoptosis. In terms of tissue distribution, lymphocytes and monocytes.

It localises to the cell membrane. The protein localises to the secreted. Its function is as follows. Receptor for the invariable Fc fragment of immunoglobulin gamma (IgG). Optimally activated upon binding of clustered antigen-IgG complexes displayed on cell surfaces, triggers lysis of antibody-coated cells, a process known as antibody-dependent cellular cytotoxicity (ADCC). Does not bind free monomeric IgG, thus avoiding inappropriate effector cell activation in the absence of antigenic trigger. Mediates IgG effector functions on natural killer (NK) cells. Binds antigen-IgG complexes generated upon infection and triggers NK cell-dependent cytokine production and degranulation to limit viral load and propagation. Involved in the generation of memory-like adaptive NK cells capable to produce high amounts of IFNG and to efficiently eliminate virus-infected cells via ADCC. Regulates NK cell survival and proliferation, in particular by preventing NK cell progenitor apoptosis. Fc-binding subunit that associates with CD247 and/or FCER1G adapters to form functional signaling complexes. Following the engagement of antigen-IgG complexes, triggers phosphorylation of immunoreceptor tyrosine-based activation motif (ITAM)-containing adapters with subsequent activation of phosphatidylinositol 3-kinase signaling and sustained elevation of intracellular calcium that ultimately drive NK cell activation. The ITAM-dependent signaling coupled to receptor phosphorylation by PKC mediates robust intracellular calcium flux that leads to production of pro-inflammatory cytokines, whereas in the absence of receptor phosphorylation it mainly activates phosphatidylinositol 3-kinase signaling leading to cell degranulation. Costimulates NK cells and trigger lysis of target cells independently of IgG binding. Mediates the antitumor activities of therapeutic antibodies. Upon ligation on monocytes triggers TNFA-dependent ADCC of IgG-coated tumor cells. Mediates enhanced ADCC in response to afucosylated IgGs. The polypeptide is Low affinity immunoglobulin gamma Fc region receptor III-A (FCGR3A) (Macaca fascicularis (Crab-eating macaque)).